The sequence spans 266 residues: 2-Cys peroxiredoxin BAS1, chloroplastic (266 aa).

Residues 1–16 (MASVASSTTLISSPSS) show a composition bias toward low complexity. The segment at 1-25 (MASVASSTTLISSPSSRVFPAKSSL) is disordered. Residues 1–65 (MASVASSTTL…SSTSRRSFAV (65 aa)) constitute a chloroplast transit peptide. A Thioredoxin domain is found at 73-232 (PLVGNKAPDF…TMRTLQALQY (160 aa)). Cysteine 119 (cysteine sulfenic acid (-SOH) intermediate) is an active-site residue.

This sequence belongs to the peroxiredoxin family. AhpC/Prx1 subfamily. As to quaternary structure, homodimer; disulfide-linked, upon oxidation. Interacts with the plastidial thioredoxin CDSP32. Interacts with the plastidial NADPH-dependent thioredoxin reductase ANTR-C.

The protein localises to the plastid. The protein resides in the chloroplast. The catalysed reaction is a hydroperoxide + [thioredoxin]-dithiol = an alcohol + [thioredoxin]-disulfide + H2O. Its function is as follows. Thiol-specific peroxidase that catalyzes the reduction of hydrogen peroxide and organic hydroperoxides to water and alcohols, respectively. Plays a role in cell protection against oxidative stress by detoxifying peroxides. May be an antioxidant enzyme particularly in the developing shoot and photosynthesizing leaf. This is 2-Cys peroxiredoxin BAS1, chloroplastic (BAS1) from Arabidopsis thaliana (Mouse-ear cress).